A 109-amino-acid polypeptide reads, in one-letter code: Parvalbumin beta (109 aa).

A2 carries the post-translational modification N-acetylalanine. Residues 22–41 (AGSFDHKKFFKACGLSGKST) form an igE-binding region. 2 consecutive EF-hand domains span residues 39-74 (KSTD…FKAG) and 78-109 (LSDA…MIKG). Residues D52, D54, S56, F58, E60, E63, D91, D93, D95, K97, and E102 each coordinate Ca(2+).

It belongs to the parvalbumin family. The N-terminus is blocked. As to expression, expressed in both white and dark muscles (at protein level). About eight and a half times lower expression in the dark muscle than in the white muscle (at protein level).

In terms of biological role, in muscle, parvalbumin is thought to be involved in relaxation after contraction. It binds two calcium ions. In Scomber japonicus (Chub mackerel), this protein is Parvalbumin beta.